The following is a 137-amino-acid chain: Protein PsiE homolog (137 aa).

A run of 4 helical transmembrane segments spans residues 15–35 (LRITLNLALIMVGFTLVAFLI), 55–75 (YYMTQDILTFFLYFEFIALIV), 82–102 (FHFPLRYFIYIGITAIIRFII), and 108–128 (ATSTLILSGAILLLVAALFLA).

This sequence belongs to the PsiE family.

The protein resides in the cell membrane. This is Protein PsiE homolog from Listeria innocua serovar 6a (strain ATCC BAA-680 / CLIP 11262).